The primary structure comprises 205 residues: Cytochrome c oxidase subunit 3 (205 aa).

The next 5 helical transmembrane spans lie at 29-49 (TIVF…MYFV), 73-93 (LAIT…VFAA), 104-124 (WFLI…YEYF), 144-164 (ITTG…VVVL), and 184-204 (SYYW…IYFI).

The protein belongs to the cytochrome c oxidase subunit 3 family. As to quaternary structure, associates with subunits I, II and IV to form cytochrome c oxidase.

Its subcellular location is the cell membrane. It catalyses the reaction 4 Fe(II)-[cytochrome c] + O2 + 8 H(+)(in) = 4 Fe(III)-[cytochrome c] + 2 H2O + 4 H(+)(out). This Corynebacterium efficiens (strain DSM 44549 / YS-314 / AJ 12310 / JCM 11189 / NBRC 100395) protein is Cytochrome c oxidase subunit 3 (ctaE).